Reading from the N-terminus, the 216-residue chain is Protein-L-isoaspartate O-methyltransferase (216 aa).

The active site involves Ser61.

The protein belongs to the methyltransferase superfamily. L-isoaspartyl/D-aspartyl protein methyltransferase family.

It is found in the cytoplasm. It carries out the reaction [protein]-L-isoaspartate + S-adenosyl-L-methionine = [protein]-L-isoaspartate alpha-methyl ester + S-adenosyl-L-homocysteine. Functionally, catalyzes the methyl esterification of L-isoaspartyl residues in peptides and proteins that result from spontaneous decomposition of normal L-aspartyl and L-asparaginyl residues. It plays a role in the repair and/or degradation of damaged proteins. This Dinoroseobacter shibae (strain DSM 16493 / NCIMB 14021 / DFL 12) protein is Protein-L-isoaspartate O-methyltransferase.